The sequence spans 453 residues: UPF0210 protein Pcar_2119 (453 aa).

It belongs to the UPF0210 family. Homodimer.

This is UPF0210 protein Pcar_2119 from Syntrophotalea carbinolica (strain DSM 2380 / NBRC 103641 / GraBd1) (Pelobacter carbinolicus).